We begin with the raw amino-acid sequence, 677 residues long: Methionine--tRNA ligase (677 aa).

The short motif at P15–H25 is the 'HIGH' region element. The Zn(2+) site is built by C146, C149, C159, and C162. The short motif at K333 to S337 is the 'KMSKS' region element. K336 provides a ligand contact to ATP. Positions D575–K677 constitute a tRNA-binding domain.

It belongs to the class-I aminoacyl-tRNA synthetase family. MetG type 1 subfamily. Homodimer. The cofactor is Zn(2+).

Its subcellular location is the cytoplasm. The catalysed reaction is tRNA(Met) + L-methionine + ATP = L-methionyl-tRNA(Met) + AMP + diphosphate. Its function is as follows. Is required not only for elongation of protein synthesis but also for the initiation of all mRNA translation through initiator tRNA(fMet) aminoacylation. This is Methionine--tRNA ligase from Enterobacter sp. (strain 638).